We begin with the raw amino-acid sequence, 107 residues long: UPF0060 membrane protein glr4174 (107 aa).

4 consecutive transmembrane segments (helical) span residues 1-21 (MALL…FAFW), 26-46 (LGKN…FAWL), 58-78 (AYAA…WLVE), and 87-107 (LAGA…DRSP).

This sequence belongs to the UPF0060 family.

It is found in the cell inner membrane. This is UPF0060 membrane protein glr4174 from Gloeobacter violaceus (strain ATCC 29082 / PCC 7421).